We begin with the raw amino-acid sequence, 120 residues long: Large ribosomal subunit protein bL20 (120 aa).

This sequence belongs to the bacterial ribosomal protein bL20 family.

In terms of biological role, binds directly to 23S ribosomal RNA and is necessary for the in vitro assembly process of the 50S ribosomal subunit. It is not involved in the protein synthesizing functions of that subunit. This Desulfitobacterium hafniense (strain DSM 10664 / DCB-2) protein is Large ribosomal subunit protein bL20.